We begin with the raw amino-acid sequence, 380 residues long: Outer membrane protein 40 (380 aa).

Residues 1–21 (MKAKSLLLALAGLACTFSATA) form the signal peptide. Gln22 is subject to Pyrrolidone carboxylic acid. The region spanning 270–380 (PTVTRVVVDN…NRIVVMTAAE (111 aa)) is the OmpA-like domain.

This sequence belongs to the outer membrane OOP (TC 1.B.6) superfamily. Disulfide-linked heterodimer with Omp41.

It is found in the cell outer membrane. Its function is as follows. May have porin activity and function in peptidoglycan binding. The protein is Outer membrane protein 40 of Porphyromonas gingivalis (strain ATCC BAA-308 / W83).